We begin with the raw amino-acid sequence, 492 residues long: MPESMSFSLNQLNLQLLIPMCISLFGGIILLGVGVFNKTKSRDLYITISMLFVVLNLGFLFLEGNPIRQFGFFNLLLVDGISLLTQIIMLLATFVLLLFFMNQNNLPETQGAEFYALLLFSIAGFAFMASSQNLILILLGLETASLCLYALIALHNQKSAFEASIKYFIMGALATTFYAFGAMLLYAATGSVDIISIATFLHQQSYQPSILVFAGFVFLLCALGFKVTLVPFHSWGPDVYEGSNALLAAFIAIVPKIVTFAVIIRIFSVFIDSHSAFVEYTLYVIVVLTMTIPNLIALTQKDVKRMLAYSSISHSGFVLAAVLINTPQSHSVIFFYWFLFLFANIGAFGILWLSVDCKKNYQTQISHPFEKFSGMIKTNPTLAILLTLFMFALAGIPPFCVFWGKMYLMQSAISANYTILALIMAINSIIAGFYYLKLVIYIFAKEPYEIKDSQSSLELSSKFALSITAFVSVACLFMVQNLLEIIEKYILK.

14 consecutive transmembrane segments (helical) span residues 16–36, 44–64, 81–101, 111–131, 134–154, 168–188, 210–230, 244–264, 276–296, 306–326, 332–352, 382–402, 423–443, and 463–483; these read LLIP…VGVF, LYIT…FLEG, ISLL…LFFM, GAEF…MASS, LILI…LIAL, FIMG…LYAA, ILVF…VTLV, NALL…AVII, AFVE…PNLI, MLAY…LINT, VIFF…GILW, LAIL…FCVF, IMAI…IYIF, and FALS…QNLL.

This sequence belongs to the complex I subunit 2 family. NDH-1 is composed of 14 different subunits. Subunits NuoA, H, J, K, L, M, N constitute the membrane sector of the complex.

Its subcellular location is the cell inner membrane. The catalysed reaction is a quinone + NADH + 5 H(+)(in) = a quinol + NAD(+) + 4 H(+)(out). NDH-1 shuttles electrons from NADH, via FMN and iron-sulfur (Fe-S) centers, to quinones in the respiratory chain. The immediate electron acceptor for the enzyme in this species is believed to be ubiquinone. Couples the redox reaction to proton translocation (for every two electrons transferred, four hydrogen ions are translocated across the cytoplasmic membrane), and thus conserves the redox energy in a proton gradient. The sequence is that of NADH-quinone oxidoreductase subunit N from Helicobacter hepaticus (strain ATCC 51449 / 3B1).